Reading from the N-terminus, the 80-residue chain is Exodeoxyribonuclease 7 small subunit (80 aa).

This sequence belongs to the XseB family. As to quaternary structure, heterooligomer composed of large and small subunits.

It localises to the cytoplasm. It carries out the reaction Exonucleolytic cleavage in either 5'- to 3'- or 3'- to 5'-direction to yield nucleoside 5'-phosphates.. Bidirectionally degrades single-stranded DNA into large acid-insoluble oligonucleotides, which are then degraded further into small acid-soluble oligonucleotides. The sequence is that of Exodeoxyribonuclease 7 small subunit from Rickettsia massiliae (strain Mtu5).